We begin with the raw amino-acid sequence, 62 residues long: Large ribosomal subunit protein uL30 (62 aa).

It belongs to the universal ribosomal protein uL30 family. Part of the 50S ribosomal subunit.

The protein is Large ribosomal subunit protein uL30 of Heliobacterium modesticaldum (strain ATCC 51547 / Ice1).